Consider the following 89-residue polypeptide: Cell division topological specificity factor (89 aa).

Belongs to the MinE family.

Prevents the cell division inhibition by proteins MinC and MinD at internal division sites while permitting inhibition at polar sites. This ensures cell division at the proper site by restricting the formation of a division septum at the midpoint of the long axis of the cell. In Photorhabdus laumondii subsp. laumondii (strain DSM 15139 / CIP 105565 / TT01) (Photorhabdus luminescens subsp. laumondii), this protein is Cell division topological specificity factor.